Consider the following 447-residue polypeptide: Na(+)/H(+) antiporter NhaA 2 (447 aa).

A run of 10 helical transmembrane segments spans residues 34–54, 77–97, 115–135, 146–166, 176–196, 200–220, 290–310, 321–341, 359–379, and 393–413; these read VGGV…NSPW, LTLG…VVGL, ALPI…FVLV, GWAI…AVIG, FLLT…AVFY, INGL…LCVQ, VSAG…SIGG, PITL…IVLT, WVDV…SLLI, and FVKI…AVVL.

The protein belongs to the NhaA Na(+)/H(+) (TC 2.A.33) antiporter family.

It is found in the cell membrane. The enzyme catalyses Na(+)(in) + 2 H(+)(out) = Na(+)(out) + 2 H(+)(in). In terms of biological role, na(+)/H(+) antiporter that extrudes sodium in exchange for external protons. This is Na(+)/H(+) antiporter NhaA 2 from Mycolicibacterium gilvum (strain PYR-GCK) (Mycobacterium gilvum (strain PYR-GCK)).